We begin with the raw amino-acid sequence, 526 residues long: D-arabinono-1,4-lactone oxidase (526 aa).

One can recognise an FAD-binding PCMH-type domain in the interval 22–196 (FWSRPSLYFQ…VYATLRTVPA (175 aa)). The residue at position 59 (histidine 59) is a Pros-8alpha-FAD histidine.

This sequence belongs to the oxygen-dependent FAD-linked oxidoreductase family. The cofactor is FAD.

It is found in the mitochondrion membrane. It catalyses the reaction D-arabinono-1,4-lactone + O2 = dehydro-D-arabinono-1,4-lactone + H2O2 + H(+). It participates in cofactor biosynthesis; D-erythroascorbate biosynthesis; dehydro-D-arabinono-1,4-lactone from D-arabinose: step 2/2. The sequence is that of D-arabinono-1,4-lactone oxidase (ALO1) from Yarrowia lipolytica (strain CLIB 122 / E 150) (Yeast).